A 194-amino-acid chain; its full sequence is Peptidyl-tRNA hydrolase (194 aa).

Position 17 (Tyr-17) interacts with tRNA. Residue His-22 is the Proton acceptor of the active site. Positions 68, 70, and 116 each coordinate tRNA.

It belongs to the PTH family. Monomer.

Its subcellular location is the cytoplasm. The enzyme catalyses an N-acyl-L-alpha-aminoacyl-tRNA + H2O = an N-acyl-L-amino acid + a tRNA + H(+). Hydrolyzes ribosome-free peptidyl-tRNAs (with 1 or more amino acids incorporated), which drop off the ribosome during protein synthesis, or as a result of ribosome stalling. In terms of biological role, catalyzes the release of premature peptidyl moieties from peptidyl-tRNA molecules trapped in stalled 50S ribosomal subunits, and thus maintains levels of free tRNAs and 50S ribosomes. The chain is Peptidyl-tRNA hydrolase from Haemophilus ducreyi (strain 35000HP / ATCC 700724).